Here is a 265-residue protein sequence, read N- to C-terminus: Putative cysteine-rich receptor-like protein kinase 9 (265 aa).

An N-terminal signal peptide occupies residues 1 to 23; sequence MSSLISFIFLFLFSFLTSFKASA. Gnk2-homologous domains lie at 27-131 and 142-244; these read FYLN…DKNI and FILS…LYSF. Asn-35, Asn-60, Asn-69, Asn-153, Asn-177, and Asn-246 each carry an N-linked (GlcNAc...) asparagine glycan.

The protein belongs to the protein kinase superfamily. Ser/Thr protein kinase family. CRK subfamily.

The protein resides in the secreted. The polypeptide is Putative cysteine-rich receptor-like protein kinase 9 (CRK9) (Arabidopsis thaliana (Mouse-ear cress)).